Reading from the N-terminus, the 387-residue chain is 3-ketoacyl-CoA thiolase (387 aa).

C91 functions as the Acyl-thioester intermediate in the catalytic mechanism. Residues H343 and C373 each act as proton acceptor in the active site.

Belongs to the thiolase-like superfamily. Thiolase family. In terms of assembly, heterotetramer of two alpha chains (FadB) and two beta chains (FadA).

It localises to the cytoplasm. It carries out the reaction an acyl-CoA + acetyl-CoA = a 3-oxoacyl-CoA + CoA. It functions in the pathway lipid metabolism; fatty acid beta-oxidation. Catalyzes the final step of fatty acid oxidation in which acetyl-CoA is released and the CoA ester of a fatty acid two carbons shorter is formed. This is 3-ketoacyl-CoA thiolase from Serratia proteamaculans (strain 568).